Consider the following 105-residue polypeptide: Large ribosomal subunit protein bL21 (105 aa).

Belongs to the bacterial ribosomal protein bL21 family. Part of the 50S ribosomal subunit. Contacts protein L20.

This protein binds to 23S rRNA in the presence of protein L20. This chain is Large ribosomal subunit protein bL21, found in Porphyromonas gingivalis (strain ATCC BAA-308 / W83).